The following is a 228-amino-acid chain: Thermonuclease (228 aa).

Positions 1–23 are cleaved as a signal peptide; sequence MTEYLLSAGICMAIVSILLIGMA. Residues 24–60 constitute a propeptide that is removed on maturation; it reads ISNVSKGQYAKRFFFFATSCLVLTLVVVSSLSSSANA. Ca(2+) is bound at residue D100. Residue R114 is part of the active site. Ca(2+) contacts are provided by D119 and T120. Residues E122 and R166 contribute to the active site.

Belongs to the thermonuclease family. It depends on Ca(2+) as a cofactor.

It localises to the secreted. It catalyses the reaction Endonucleolytic cleavage to nucleoside 3'-phosphates and 3'-phosphooligonucleotide end-products.. Enzyme that catalyzes the hydrolysis of both DNA and RNA at the 5' position of the phosphodiester bond. This is Thermonuclease (nuc) from Staphylococcus aureus (strain MSSA476).